A 158-amino-acid chain; its full sequence is Hypoxanthine DNA glycosylase (158 aa).

N39 is a catalytic residue.

The protein belongs to the uracil-DNA glycosylase (UDG) superfamily. Type 6 (HDG) family.

Its function is as follows. Excises hypoxanthine, a deamination product of adenine, from double-stranded DNA. Acts on double-stranded DNA containing G/I, T/I, A/I and C/I base pairs, but not on single-stranded inosine-containing DNA. Also has minor xanthine DNA glycosylase activity. Lacks any detectable uracil-DNA glycosylase activity. The sequence is that of Hypoxanthine DNA glycosylase from Methanosarcina acetivorans (strain ATCC 35395 / DSM 2834 / JCM 12185 / C2A).